A 297-amino-acid chain; its full sequence is MKLLAKAPLNLLRAFEAAGRTGAFALAASELELSPSAISHAIRKLENLLDVRLFQRSTREITLTKEGEILLEHIQRGFNELQQGLALVTADESRPLRLHTAPSFAHQWLLPRLGKFIRENPSIDLRLSASTEYARFEQDDFDLDIVYGEPRPSPYEKIPLAVEELTPLCSPQLAERLKKPEDLYALTLIQCDVQLYQWKGWFEANKMTPPNNYGLRFDRSFMAIAAAVDGLGVVLESKLLAEREIASGKLVCPLVNSTSEIHYIGHYLVFPQHQHMHSALDVFKTWLLNELNLGKIR.

One can recognise an HTH lysR-type domain in the interval 7–64 (APLNLLRAFEAAGRTGAFALAASELELSPSAISHAIRKLENLLDVRLFQRSTREITLT). Residues 24–44 (FALAASELELSPSAISHAIRK) constitute a DNA-binding region (H-T-H motif).

Belongs to the LysR transcriptional regulatory family.

Its function is as follows. Apparent regulatory gene involved in peroxide resistance in stationary phase. The sequence is that of HTH-type transcriptional regulator PerR (perR) from Escherichia coli (strain K12).